The sequence spans 693 residues: MSALEVQNINWQMPMNRRAHHTDKFSSQDFIVRRGQPWEVILLCNRSLESGDNLNFIVSTGPQPSESARTKAVFSISGRNTSGWSAALKASNGNNLFIAIASPVSAPIGLYTLNVEVSSKGRVSSVKLGTFTVLFNPWQQGDDVFMSNHAERQEYVEEDSGIIYVGSTNRIGMVGWNFGQFEEDILSISLSILDRSLNFRRDPATDVARRNDPKYVCRVLSAMINANDDSGVLSGNWSGNYSGGVDPRTWNGSVEILKNWKKSGFRPVQFGQCWVFAGTLNTVLRCLGVPSRVITNFNSAHDTDRNLSVDVYYDAMGNPLEKGSDSVWNFHVWNEGWFVRTDLGPSYNGWQVLDATPQERSQGVFQCGPASVNAIKDGEVDQNFDMIFIFAEVNADRITWIYNNRDGSQKQNSVDTYSIGKYISTKAVGSNSRMDVTIKYKHPEGSKEERQVQQKAMNKLKPNASFGATSSRGPQGEEKEPSISGKFKVTGVLAVGKEVSLALILKNTTSDRKTVTTNMTAWTIVYNGTLVHEVWKDSATISLDPEEEIQYPVKIAYSQYDRYLKADNMIRITAVCKVPDEAEVVVERDVILDNPTLTLEVLDQAQLRKPVVVQMLFSNPLDEPVKNCVLMVEGSGLLRGSLKIDVPALRPKEKSRVRFEIFPTRIGIKQLLADFSCNKFPAIKAMLVIEVSE.

Residue Tyr111 is modified to Phosphotyrosine. Thr112 bears the Phosphothreonine mark. Residues Ala222, Asn225, Asn227, and Asp228 each coordinate Ca(2+). Cys273 is an active-site residue. Asp302, Asp304, Asn306, Ser308, and Asp325 together coordinate Ca(2+). Active-site residues include His331 and Asp354. Residues Asn394, Thr416, Glu444, and Glu449 each contribute to the Ca(2+) site. Residues 455 to 482 (KAMNKLKPNASFGATSSRGPQGEEKEPS) form a disordered region.

It belongs to the transglutaminase superfamily. Transglutaminase family. As to quaternary structure, consists of two polypeptide chains, which are synthesized as a precursor form of a single polypeptide. The cofactor is Ca(2+). Post-translationally, activated by proteolytic processing. In vitro activation is commonly achieved by cleavage with dispase, a neutral bacterial protease. Physiological activation may be catalyzed by CTSL and, to a lesser extent, by CTSS.

The protein resides in the cytoplasm. The catalysed reaction is L-glutaminyl-[protein] + L-lysyl-[protein] = [protein]-L-lysyl-N(6)-5-L-glutamyl-[protein] + NH4(+). In terms of biological role, catalyzes the calcium-dependent formation of isopeptide cross-links between glutamine and lysine residues in various proteins, as well as the conjugation of polyamines to proteins. Involved in the formation of the cornified envelope (CE), a specialized component consisting of covalent cross-links of proteins beneath the plasma membrane of terminally differentiated keratinocytes. Catalyzes small proline-rich proteins and LOR cross-linking to form small interchain oligomers, which are further cross-linked by TGM1 onto the growing CE scaffold. In hair follicles, involved in cross-linking structural proteins to hardening the inner root sheath. The sequence is that of Protein-glutamine gamma-glutamyltransferase E (Tgm3) from Rattus norvegicus (Rat).